The chain runs to 217 residues: MTHSAWHDEIKQVLPKDYYRRINRFLDEVYATGVVYPPRDNVFKALQVTPLEETRVLILGQDPYHGPLQAQGLSFSVPDSIPAPPSLQNILEELAADIGVRNHHDLSSWAEQGVLLLNACLTVPEGRANGHAGLIWEPFTDAVIKVLNAKDRPVVFILWGAYARRKKALITNPIHHVIESPHPSPLSAYRGFFGSKPFSRANAILEKEGLGQIDWLR.

Residue Asp62 is the Proton acceptor of the active site.

This sequence belongs to the uracil-DNA glycosylase (UDG) superfamily. UNG family.

Its subcellular location is the cytoplasm. The enzyme catalyses Hydrolyzes single-stranded DNA or mismatched double-stranded DNA and polynucleotides, releasing free uracil.. In terms of biological role, excises uracil residues from the DNA which can arise as a result of misincorporation of dUMP residues by DNA polymerase or due to deamination of cytosine. This is Uracil-DNA glycosylase from Streptococcus equi subsp. equi (strain 4047).